We begin with the raw amino-acid sequence, 149 residues long: Calmodulin (149 aa).

A2 bears the N-acetylalanine mark. EF-hand domains follow at residues E8–N43, P44–D79, D81–K116, and L117–K149. Ca(2+) is bound by residues D21, D23, D25, T27, E32, D57, D59, N61, T63, E68, D94, D96, N98, Y100, and E105. K116 is subject to N6,N6,N6-trimethyllysine. The Ca(2+) site is built by D130, D132, D134, Q136, and E141.

The protein belongs to the calmodulin family.

Calmodulin acts as part of a calcium signal transduction pathway by mediating the control of a large number of enzymes, ion channels, aquaporins and other proteins through calcium-binding. Calcium-binding is required for the activation of calmodulin. Among the enzymes to be stimulated by the calmodulin-calcium complex are a number of protein kinases, such as myosin light-chain kinases and calmodulin-dependent protein kinase type II (CaMK2), and phosphatases. In Epinephelus akaara (Hong Kong grouper), this protein is Calmodulin (calm).